The primary structure comprises 400 residues: Enoyl-[acyl-carrier-protein] reductase [NADH] (400 aa).

NAD(+) is bound by residues 48–53, 74–75, 111–112, and 139–140; these read GSSSGY, FE, DA, and LA. Position 225 (tyrosine 225) interacts with substrate. The Proton donor role is filled by tyrosine 235. NAD(+) is bound by residues lysine 244 and 273 to 275; that span reads VVT.

This sequence belongs to the TER reductase family. As to quaternary structure, monomer.

The enzyme catalyses a 2,3-saturated acyl-[ACP] + NAD(+) = a (2E)-enoyl-[ACP] + NADH + H(+). It functions in the pathway lipid metabolism; fatty acid biosynthesis. Involved in the final reduction of the elongation cycle of fatty acid synthesis (FAS II). Catalyzes the reduction of a carbon-carbon double bond in an enoyl moiety that is covalently linked to an acyl carrier protein (ACP). This Shewanella denitrificans (strain OS217 / ATCC BAA-1090 / DSM 15013) protein is Enoyl-[acyl-carrier-protein] reductase [NADH].